Here is a 302-residue protein sequence, read N- to C-terminus: 33 kDa chaperonin (302 aa).

Cystine bridges form between C240-C242 and C273-C276.

This sequence belongs to the HSP33 family. In terms of processing, under oxidizing conditions two disulfide bonds are formed involving the reactive cysteines. Under reducing conditions zinc is bound to the reactive cysteines and the protein is inactive.

It is found in the cytoplasm. Functionally, redox regulated molecular chaperone. Protects both thermally unfolding and oxidatively damaged proteins from irreversible aggregation. Plays an important role in the bacterial defense system toward oxidative stress. This is 33 kDa chaperonin from Synechocystis sp. (strain ATCC 27184 / PCC 6803 / Kazusa).